The sequence spans 251 residues: Protein unc-119 homolog B (251 aa).

The tract at residues Met1 to Lys28 is disordered. Residue Ser2 is modified to N-acetylserine. Lys24 is modified (N6-acetyllysine). Tyr142 contacts tetradecanoate.

Belongs to the PDE6D/unc-119 family. Found in a complex with ARL3, RP2 and UNC119B; RP2 induces hydrolysis of GTP ARL3 in the complex, leading to the release of UNC119B. Interacts with NPHP3 (when myristoylated). Interacts with CYS1 (when myristoylated). Interacts with MACIR; interaction only takes place when UNC119B is not liganded with myristoylated proteins.

The protein resides in the cell projection. The protein localises to the cilium. Its function is as follows. Myristoyl-binding protein that acts as a cargo adapter: specifically binds the myristoyl moiety of a subset of N-terminally myristoylated proteins and is required for their localization. Binds myristoylated NPHP3 and plays a key role in localization of NPHP3 to the primary cilium membrane. Does not bind all myristoylated proteins. Probably plays a role in trafficking proteins in photoreceptor cells. The sequence is that of Protein unc-119 homolog B (UNC119B) from Homo sapiens (Human).